Reading from the N-terminus, the 214-residue chain is Urease accessory protein UreF (214 aa).

Belongs to the UreF family. As to quaternary structure, ureD, UreF and UreG form a complex that acts as a GTP-hydrolysis-dependent molecular chaperone, activating the urease apoprotein by helping to assemble the nickel containing metallocenter of UreC. The UreE protein probably delivers the nickel.

It is found in the cytoplasm. Functionally, required for maturation of urease via the functional incorporation of the urease nickel metallocenter. The polypeptide is Urease accessory protein UreF (Ruegeria sp. (strain TM1040) (Silicibacter sp.)).